Consider the following 271-residue polypeptide: Formamidopyrimidine-DNA glycosylase (271 aa).

Proline 2 (schiff-base intermediate with DNA) is an active-site residue. Glutamate 3 serves as the catalytic Proton donor. Lysine 58 acts as the Proton donor; for beta-elimination activity in catalysis. The DNA site is built by histidine 91, arginine 110, and arginine 152. The FPG-type zinc-finger motif lies at 237-271 (LVYGREGQPCVHCGRPIRCETIGQRSSYFCTRCQR). Catalysis depends on arginine 261, which acts as the Proton donor; for delta-elimination activity.

The protein belongs to the FPG family. As to quaternary structure, monomer. It depends on Zn(2+) as a cofactor.

It catalyses the reaction Hydrolysis of DNA containing ring-opened 7-methylguanine residues, releasing 2,6-diamino-4-hydroxy-5-(N-methyl)formamidopyrimidine.. The catalysed reaction is 2'-deoxyribonucleotide-(2'-deoxyribose 5'-phosphate)-2'-deoxyribonucleotide-DNA = a 3'-end 2'-deoxyribonucleotide-(2,3-dehydro-2,3-deoxyribose 5'-phosphate)-DNA + a 5'-end 5'-phospho-2'-deoxyribonucleoside-DNA + H(+). Involved in base excision repair of DNA damaged by oxidation or by mutagenic agents. Acts as a DNA glycosylase that recognizes and removes damaged bases. Has a preference for oxidized purines, such as 7,8-dihydro-8-oxoguanine (8-oxoG). Has AP (apurinic/apyrimidinic) lyase activity and introduces nicks in the DNA strand. Cleaves the DNA backbone by beta-delta elimination to generate a single-strand break at the site of the removed base with both 3'- and 5'-phosphates. The sequence is that of Formamidopyrimidine-DNA glycosylase from Syntrophotalea carbinolica (strain DSM 2380 / NBRC 103641 / GraBd1) (Pelobacter carbinolicus).